Consider the following 72-residue polypeptide: uncharacterized protein (72 aa).

A disordered region spans residues Ala51–Glu72.

Belongs to the YiiE family.

This is an uncharacterized protein from Escherichia coli O6:K15:H31 (strain 536 / UPEC).